We begin with the raw amino-acid sequence, 256 residues long: MEAIKVLIADDNREFCEVLEEYFNEQEDFVLSGVAHNGQETLELIQEQEPDIVILDIIMPHLDGIGVLEKLQVLNFEPRPKIVILTALGQESMTMRSVELGADYYILKPFDLEVLGNRLRQLANGHPLPTAPSQVSRAGRNMDVEVTKIIHQMGVPAHIKGYQYLREAILMVIDDVSLLGAVTKELYPLIARKYMTTPSRVERAIRHAIELAWDRGNVEMMNKFFGYTINVERGKPTNSEFIAMVADKLRIGAKIN.

In terms of domain architecture, Response regulatory spans 5–123; the sequence is KVLIADDNRE…VLGNRLRQLA (119 aa). Aspartate 10, aspartate 11, and aspartate 56 together coordinate Ca(2+). At aspartate 56 the chain carries 4-aspartylphosphate. Positions 188-207 form a DNA-binding region, H-T-H motif; sequence PLIARKYMTTPSRVERAIRH.

Ca(2+) is required as a cofactor.

It is found in the cytoplasm. May play the central regulatory role in sporulation. It may be an element of the effector pathway responsible for the activation of sporulation genes in response to nutritional stress. Spo0A may act in concert with spo0H (a sigma factor) to control the expression of some genes that are critical to the sporulation process. In Moorella thermoacetica (strain ATCC 39073 / JCM 9320), this protein is Stage 0 sporulation protein A homolog (spo0A).